The sequence spans 308 residues: HPr kinase/phosphorylase (308 aa).

Residues His-138 and Lys-159 contribute to the active site. 153-160 is a binding site for ATP; it reads GESGLGKS. Ser-160 contacts Mg(2+). The Proton acceptor; for phosphorylation activity. Proton donor; for dephosphorylation activity role is filled by Asp-177. The segment at 201 to 210 is important for the catalytic mechanism of both phosphorylation and dephosphorylation; it reads LEVRGLGLLD. Glu-202 contributes to the Mg(2+) binding site. The active site involves Arg-243. Residues 264 to 269 form an important for the catalytic mechanism of dephosphorylation region; that stretch reads QVAAGR.

This sequence belongs to the HPrK/P family. Homohexamer. Mg(2+) serves as cofactor.

The enzyme catalyses [HPr protein]-L-serine + ATP = [HPr protein]-O-phospho-L-serine + ADP + H(+). The catalysed reaction is [HPr protein]-O-phospho-L-serine + phosphate + H(+) = [HPr protein]-L-serine + diphosphate. Functionally, catalyzes the ATP- as well as the pyrophosphate-dependent phosphorylation of a specific serine residue in HPr, a phosphocarrier protein of the phosphoenolpyruvate-dependent sugar phosphotransferase system (PTS). HprK/P also catalyzes the pyrophosphate-producing, inorganic phosphate-dependent dephosphorylation (phosphorolysis) of seryl-phosphorylated HPr (P-Ser-HPr). This Bordetella petrii (strain ATCC BAA-461 / DSM 12804 / CCUG 43448) protein is HPr kinase/phosphorylase.